The following is a 415-amino-acid chain: ATP-dependent RNA helicase RhlB (415 aa).

The short motif at 9-37 is the Q motif element; that stretch reads QRFSALPLHPIVRGALAKKGFDFCTPIQA. The Helicase ATP-binding domain maps to 40–218; the sequence is LPISLNGRDV…FEDMNDPEYI (179 aa). Position 53-60 (53-60) interacts with ATP; it reads AQTGTGKT. The DEAD box motif lies at 164–167; sequence DEAD. In terms of domain architecture, Helicase C-terminal spans 241–389; it reads DKMALLLTLM…VSQYETEALL (149 aa).

The protein belongs to the DEAD box helicase family. RhlB subfamily. Component of the RNA degradosome, which is a multiprotein complex involved in RNA processing and mRNA degradation.

It is found in the cytoplasm. It catalyses the reaction ATP + H2O = ADP + phosphate + H(+). Its function is as follows. DEAD-box RNA helicase involved in RNA degradation. Has RNA-dependent ATPase activity and unwinds double-stranded RNA. This is ATP-dependent RNA helicase RhlB from Haemophilus influenzae (strain PittGG).